We begin with the raw amino-acid sequence, 685 residues long: Phenoloxidase subunit 1 (685 aa).

Residues 1-51 constitute a propeptide that is removed on maturation; the sequence is MSDAKNNLLLFFDRPSEPCFMQKGEENAVFEIPDNYYPEKYQRVSNAIGNR. Asn-184 carries an N-linked (GlcNAc...) asparagine glycan. Cu cation-binding residues include His-209, His-213, and His-239. N-linked (GlcNAc...) asparagine glycans are attached at residues Asn-254 and Asn-324. Catalysis depends on Glu-351, which acts as the Proton acceptor. 3 residues coordinate Cu cation: His-366, His-370, and His-406. Asn-491 and Asn-540 each carry an N-linked (GlcNAc...) asparagine glycan. 2 disulfides stabilise this stretch: Cys-581-Cys-623 and Cys-583-Cys-630.

Heterodimer. It depends on Cu(2+) as a cofactor. The N-terminus is blocked. In terms of tissue distribution, synthesized by hemocytes and released into the hemolymph plasma.

The protein localises to the secreted. The enzyme catalyses 2 L-dopa + O2 = 2 L-dopaquinone + 2 H2O. It catalyses the reaction L-tyrosine + O2 = L-dopaquinone + H2O. Its function is as follows. This is a copper-containing oxidase that functions in the formation of pigments such as melanins and other polyphenolic compounds. Catalyzes the rate-limiting conversions of tyrosine to DOPA, DOPA to DOPA-quinone and possibly 5,6 dihydroxyindole to indole-5'6 quinone. The sequence is that of Phenoloxidase subunit 1 from Bombyx mori (Silk moth).